The following is a 401-amino-acid chain: Elongation factor Tu 2 (401 aa).

The tr-type G domain occupies 10-209; the sequence is KPHVNVGTIG…AVDEYIPTPV (200 aa). The G1 stretch occupies residues 19–26; it reads GHVDHGKT. 19–26 contributes to the GTP binding site; it reads GHVDHGKT. Residue threonine 26 coordinates Mg(2+). Positions 60–64 are G2; that stretch reads GITIA. The tract at residues 81–84 is G3; sequence DCPG. GTP-binding positions include 81-85 and 136-139; these read DCPGH and NKVD. The tract at residues 136 to 139 is G4; sequence NKVD. The segment at 174-176 is G5; sequence SAL.

Belongs to the TRAFAC class translation factor GTPase superfamily. Classic translation factor GTPase family. EF-Tu/EF-1A subfamily. As to quaternary structure, monomer.

It is found in the cytoplasm. The enzyme catalyses GTP + H2O = GDP + phosphate + H(+). GTP hydrolase that promotes the GTP-dependent binding of aminoacyl-tRNA to the A-site of ribosomes during protein biosynthesis. The protein is Elongation factor Tu 2 of Roseiflexus sp. (strain RS-1).